A 562-amino-acid polypeptide reads, in one-letter code: NRAMP-like transporter smf-1 (562 aa).

The Cytoplasmic segment spans residues 1–55 (MASSNNDGPIEPEAEPWRITQNDHLEQDLLEEDAESQERVDIPVDDVEKAFSFKK). Residues 56–76 (LWAFTGPGFLMSIAYLDPGNI) traverse the membrane as a helical segment. Over 77-83 (ESDLQSG) the chain is Extracellular. The chain crosses the membrane as a helical span at residues 84 to 104 (AQAAYKLLWVLLSAHIIGMLL). Residues 105-140 (QRMSARLGVVSGKHMAEVAYQFYPRLPRIILWLMIE) lie on the Cytoplasmic side of the membrane. Residues 141 to 161 (IAIVCSDMQEVIGTAIAIFLL) traverse the membrane as a helical segment. Topologically, residues 162–164 (SKG) are extracellular. The helical transmembrane segment at 165-185 (FVPLYVGVFITILDTFTFLLI) threads the bilayer. The Cytoplasmic portion of the chain corresponds to 186 to 194 (DRYGIRKLE). The helical transmembrane segment at 195 to 215 (LIFGFLILTMTVSFGYEFVVV) threads the bilayer. At 216 to 241 (KPPIGEVISGMVVPWCAGCGKGEFMQ) the chain is on the extracellular side. Residues 242–262 (AISVVGAVIMPHNLYLHSALV) form a helical membrane-spanning segment. The Cytoplasmic portion of the chain corresponds to 263–287 (KSRRVDRKDRRRVAEANKYFTLESA). A helical transmembrane segment spans residues 288–308 (IALFLSFFINLFVVAVFAHGL). The Extracellular segment spans residues 309–347 (YQKTNADVREMCIARHDIPDADIFPNNTEPVEVDIYKGG). N334 carries an N-linked (GlcNAc...) asparagine glycan. A helical transmembrane segment spans residues 348–368 (IYLGCQFGAIAMFIWGIGIFA). At 369-398 (AGQSSTMTGTYTGQFVMEGFVKIEWPKWKR) the chain is on the cytoplasmic side. The helical transmembrane segment at 399–419 (VLITRAIAITPTLVLTFYSQG) threads the bilayer. At 420–428 (VQNLTGMND) the chain is on the extracellular side. A glycan (N-linked (GlcNAc...) asparagine) is linked at N422. A helical transmembrane segment spans residues 429–449 (FLNCVQMIQLPFALIPIITFT). Residues 450–462 (SSRKIMHDFRSSK) lie on the Cytoplasmic side of the membrane. The chain crosses the membrane as a helical span at residues 463-483 (VFQIFALITSALILSINVYFI). The Extracellular segment spans residues 484–496 (SDYVFSRLGSEWY). A helical membrane pass occupies residues 497–517 (IIMVLAPITFAYVLFVLYLAL). Residues 518-562 (YCLVSCEIIPDTVSIRGFSFNKSYENDAPWLAVDSSAVHDNAGYQ) lie on the Cytoplasmic side of the membrane.

This sequence belongs to the NRAMP family. As to expression, expressed in dopaminergic neurons (at protein level). Expressed predominantly in anterior and posterior intestine, rectal gland cell, H-shaped excretory cell, vulva cells, proximal uterus and spermatheca in adults. Weakly expressed in hyp7 hypodermis, pharyngeal muscles and some anterior sensory, ring and posterior head neurons in adults. Expressed in the anchor cell at the larval stage.

It localises to the apical cell membrane. The protein resides in the cytoplasmic vesicle membrane. In terms of biological role, probable divalent metal ion transporter which regulates Mn(2+) uptake. The protein is NRAMP-like transporter smf-1 (smf-1) of Caenorhabditis elegans.